The sequence spans 254 residues: tRNA 2'-phosphotransferase 1 (254 aa).

Met-1 bears the N-acetylmethionine mark. 2 disordered regions span residues 1-30 (MNSF…DRDV) and 225-254 (RKPL…MTQQ). Positions 233 to 244 (NEEKEHQRDSKH) are enriched in basic and acidic residues.

Belongs to the KptA/TPT1 family.

It carries out the reaction 2'-phospho-[ligated tRNA] + NAD(+) = mature tRNA + ADP-alpha-D-ribose 1'',2''-cyclic phosphate + nicotinamide. In terms of biological role, catalyzes the last step of tRNA splicing, the transfer of the splice junction 2'-phosphate from ligated tRNA to NAD to produce ADP-ribose 1''-2'' cyclic phosphate. The polypeptide is tRNA 2'-phosphotransferase 1 (TRPT1) (Bos taurus (Bovine)).